A 379-amino-acid chain; its full sequence is Inactive 2'-5'-oligoadenylate synthase 1B (379 aa).

The Cytoplasmic segment spans residues 1–355 (MEQELRSIPA…VPTEVDIPSQ (355 aa)). A helical; Anchor for type IV membrane protein membrane pass occupies residues 356 to 374 (NYFFHIICLIFWLLLRLIF). The Extracellular portion of the chain corresponds to 375–379 (GKHSV).

This sequence belongs to the 2-5A synthase family. Interacts with OSBPL1A and ABCF3. Highly expressed in the brain, liver, spleen and heart.

The protein localises to the endoplasmic reticulum membrane. In terms of biological role, does not have 2'-5'-OAS activity, but can bind double-stranded RNA. Displays antiviral activity against viruses via an alternative antiviral pathway independent of RNase L. This is Inactive 2'-5'-oligoadenylate synthase 1B (Oas1b) from Rattus norvegicus (Rat).